Reading from the N-terminus, the 483-residue chain is Membrane-bound lytic murein transglycosylase F (483 aa).

Positions 1–18 (MKGLIARFIAGFALLLWA) are cleaved as a signal peptide. The interval 19–267 (WDMVFPWQQL…RIEEKYFNHL (249 aa)) is non-LT domain. The LT domain stretch occupies residues 269–483 (HFDYVDIQSY…SKESDSTLKE (215 aa)). Glutamate 312 is an active-site residue. A disordered region spans residues 458 to 483 (QQIQNNEEQPSVPQEISKESDSTLKE). Over residues 473–483 (ISKESDSTLKE) the composition is skewed to basic and acidic residues.

This sequence in the N-terminal section; belongs to the bacterial solute-binding protein 3 family. It in the C-terminal section; belongs to the transglycosylase Slt family.

It localises to the cell outer membrane. It carries out the reaction Exolytic cleavage of the (1-&gt;4)-beta-glycosidic linkage between N-acetylmuramic acid (MurNAc) and N-acetylglucosamine (GlcNAc) residues in peptidoglycan, from either the reducing or the non-reducing ends of the peptidoglycan chains, with concomitant formation of a 1,6-anhydrobond in the MurNAc residue.. Murein-degrading enzyme that degrades murein glycan strands and insoluble, high-molecular weight murein sacculi, with the concomitant formation of a 1,6-anhydromuramoyl product. Lytic transglycosylases (LTs) play an integral role in the metabolism of the peptidoglycan (PG) sacculus. Their lytic action creates space within the PG sacculus to allow for its expansion as well as for the insertion of various structures such as secretion systems and flagella. The chain is Membrane-bound lytic murein transglycosylase F from Actinobacillus pleuropneumoniae serotype 5b (strain L20).